We begin with the raw amino-acid sequence, 406 residues long: O-glycosyltransferase PaGT (406 aa).

Residues 1 to 26 (MSPPSQIKPPQGTTPVPPSELDPRSD) are disordered.

This sequence belongs to the afumC glycosyltransferase family.

It participates in mycotoxin biosynthesis. Functionally, O-glycosyltransferase; part of the 2 gene clusters that mediate the biosynthesis of fusicoccins, diterpene glucosides that display phytohormone-like activity and function as potent activators of plasma membrane H(+)-ATPases in plants by modifying 14-3-3 proteins and cause the plant disease constriction canker. The first step in the pathway is performed by the fusicoccadiene synthase PaFS that possesses both prenyl transferase and terpene cyclase activity, converting isopentenyl diphosphate and dimethylallyl diphosphate into geranylgeranyl diphosphate (GGDP) and successively converting GGDP into fusicocca-2,10(14)-diene, a precursor for fusicoccin H. The second step is the oxidation at the C-8 position by the cytochrome P450 monooxygenase PaP450-2 to yield fusicocca-2,10(14)-diene-8-beta-ol. The cytochrome P450 monooxygenase PaP450-1 then catalyzes the hydroxylation at the C-16 position to produce fusicocca-2,10(14)-diene-8-beta,16-diol. The dioxygenase fc-dox then catalyzes the 16-oxydation of fusicocca-2,10(14)-diene-8-beta,16-diol to yield an aldehyde (8-beta-hydroxyfusicocca-1,10(14)-dien-16-al). The short-chain dehydrogenase/reductase fc-sdr catalyzes the reduction of the aldehyde to yield fusicocca-1,10(14)-diene-8-beta,16-diol. The next step is the hydroxylation at C-9 performed by the cytochrome P450 monooxygenase PaP450-3 that leads to fusicoccin H aglycon which is glycosylated to fusicoccin H by the O-glycosyltransferase PaGT. Hydroxylation at C-12 by the cytochrome P450 monooxygenase PaP450-4 leads then to the production of fusicoccin Q and is followed by methylation by the O-methyltransferase PaMT to yield fusicoccin P. Fusicoccin P is further converted to fusicoccin J via prenylation by the O-glucose prenyltransferase PaPT. Cytochrome P450 monooxygenase PaP450-5 then performs hydroxylation at C-19 to yield dideacetyl-fusicoccin A which is acetylated to 3'-O-deacetyl-fusicoccin A by the O-acetyltransferase PaAT-2. Finally, a another acetylation by the O-acetyltransferase PaAT-1 yields fusicoccin A. This Phomopsis amygdali (Fusicoccum amygdali) protein is O-glycosyltransferase PaGT.